The primary structure comprises 741 residues: Pentatricopeptide repeat-containing protein At3g58590 (741 aa).

20 PPR repeats span residues 48 to 78, 79 to 113, 114 to 146, 148 to 178, 179 to 213, 214 to 248, 249 to 279, 280 to 314, 315 to 349, 350 to 380, 381 to 414, 415 to 445, 446 to 481, 483 to 508, 509 to 543, 544 to 578, 580 to 610, 611 to 645, 646 to 680, and 681 to 715; these read PVYVCNNIISLYEKLGEVSLAGKVFDQMPER, NKVSFNTIIKGYSKYGDVDKAWGVFSEMRYFGYLP, NQSTVSGLLSCASLDVRAGTQLHGLSLKYGLFM, DAFVGTCLLCLYGRLDLLEMAEQVFEDMPFK, SLETWNHMMSLLGHRGFLKECMFFFRELVRMGASL, TESSFLGVLKGVSCVKDLDISKQLHCSATKKGLDC, EISVVNSLISAYGKCGNTHMAERMFQDAGSW, DIVSWNAIICATAKSENPLKALKLFVSMPEHGFSP, NQGTYVSVLGVSSLVQLLSCGRQIHGMLIKNGCET, GIVLGNALIDFYAKCGNLEDSRLCFDYIRDK, NIVCWNALLSGYANKDGPICLSLFLQMLQMGFRP, TEYTFSTALKSCCVTELQQLHSVIVRMGYED, NDYVLSSLMRSYAKNQLMNDALLLLDWASGPTSVVP, NIVAGIYSRRGQYHESVKLISTLEQP, DTVSWNIAIAACSRSDYHEEVIELFKHMLQSNIRP, DKYTFVSILSLCSKLCDLTLGSSIHGLITKTDFSC, DTFVCNVLIDMYGKCGSIRSVMKVFEETREK, NLITWTALISCLGIHGYGQEALEKFKETLSLGFKP, DRVSFISILTACRHGGMVKEGMGLFQKMKDYGVEP, and EMDHYRCAVDLLARNGYLKEAEHLIREMPFPADAP.

Belongs to the PPR family. P subfamily.

The protein is Pentatricopeptide repeat-containing protein At3g58590 of Arabidopsis thaliana (Mouse-ear cress).